The chain runs to 351 residues: Penicillolysin (351 aa).

The signal sequence occupies residues 1 to 19; that stretch reads MRFTTLSTAFLALAQNVYA. The propeptide occupies 20-174; it reads FPIESDLSAL…TKALKPLDRR (155 aa). N-linked (GlcNAc...) asparagine glycans are attached at residues asparagine 52 and asparagine 181. Histidine 302 contacts Zn(2+). Residue glutamate 303 is part of the active site. Residues histidine 306 and aspartate 317 each coordinate Zn(2+).

It belongs to the peptidase M35 family. Requires Zn(2+) as cofactor.

It carries out the reaction Preferential cleavage of bonds with hydrophobic residues in P1'. Also 3-Asn-|-Gln-4 and 8-Gly-|-Ser-9 bonds in insulin B chain.. This Penicillium citrinum protein is Penicillolysin (plnC).